A 161-amino-acid chain; its full sequence is MEYNTSELCDLYPDMVDVVEPMFESYGGRSSFGGSLVIIKCHEDKGLIEETIAADGGGKILLIDGGGSSRRALVDAAIAEQAMDNDWEGIVCYGAVREVDALEELDIGILGVASIPVGAISEGVGELNVPVNFGGVTFLPEDHLYIDTTGVILSPEPLDIE.

Belongs to the RraA family. In terms of assembly, homotrimer. Binds to both RNA-binding sites in the C-terminal region of Rne and to RhlB.

It localises to the cytoplasm. Globally modulates RNA abundance by binding to RNase E (Rne) and regulating its endonucleolytic activity. Can modulate Rne action in a substrate-dependent manner by altering the composition of the degradosome. Modulates RNA-binding and helicase activities of the degradosome. This Idiomarina loihiensis (strain ATCC BAA-735 / DSM 15497 / L2-TR) protein is Regulator of ribonuclease activity A.